We begin with the raw amino-acid sequence, 311 residues long: Mitoferrin (311 aa).

Solcar repeat units follow at residues 15-102 (HSIP…MKSF), 111-195 (EHTL…WQQV), and 202-302 (YDPK…FKFM). The next 6 helical transmembrane spans lie at 17-36 (IPVHLAAGALAGAVEHCVMF), 77-96 (GVNAVAAGSMPAHALYFTVY), 112-132 (HTLAYGASGVVATLIHDAVMN), 170-189 (SYTTQLAMNVPFQAIHFMGY), 204-223 (PKSHLIAGGLAGGLAAAVTT), and 277-296 (GLQARVIFQVPATALSWSVY).

This sequence belongs to the mitochondrial carrier (TC 2.A.29) family.

The protein resides in the mitochondrion inner membrane. Its function is as follows. Mitochondrial iron transporter that mediates iron uptake. Probably required for heme synthesis of hemoproteins and Fe-S cluster assembly. The sequence is that of Mitoferrin from Caenorhabditis briggsae.